The chain runs to 77 residues: Small ribosomal subunit protein uS17 (77 aa).

It belongs to the universal ribosomal protein uS17 family. As to quaternary structure, part of the 30S ribosomal subunit.

In terms of biological role, one of the primary rRNA binding proteins, it binds specifically to the 5'-end of 16S ribosomal RNA. This Rickettsia canadensis (strain McKiel) protein is Small ribosomal subunit protein uS17.